Reading from the N-terminus, the 877-residue chain is Leucine--tRNA ligase (877 aa).

The 'HIGH' region signature appears at 48-58 (PYPSGKLHMGH). The 'KMSKS' region motif lies at 636-640 (KMSKS). An ATP-binding site is contributed by Lys-639.

It belongs to the class-I aminoacyl-tRNA synthetase family.

It is found in the cytoplasm. It carries out the reaction tRNA(Leu) + L-leucine + ATP = L-leucyl-tRNA(Leu) + AMP + diphosphate. The chain is Leucine--tRNA ligase from Ralstonia nicotianae (strain ATCC BAA-1114 / GMI1000) (Ralstonia solanacearum).